The primary structure comprises 1903 residues: Plexin-A4 (1903 aa).

The N-terminal stretch at 1–26 (MAFHNRRWNFTFSCCVVVLLLPLVAA) is a signal peptide. The 489-residue stretch at 27–515 (RPQQPSAATR…SESQLTRVPV (489 aa)) folds into the Sema domain. Residues 27–1246 (RPQQPSAATR…ITSDSPLSST (1220 aa)) are Extracellular-facing. Disulfide bonds link Cys97/Cys106 and Cys132/Cys140. An N-linked (GlcNAc...) asparagine glycan is attached at Asn166. Cystine bridges form between Cys291–Cys413, Cys307–Cys364, and Cys382–Cys401. A glycan (N-linked (GlcNAc...) asparagine) is linked at Asn450. The region spanning 517-567 (ACEQYSSCNECLGSGDPHCGWCVLHSMCTRKEKCERSSEPRRFASNIKQCV) is the PSI 1 domain. 4 disulfides stabilise this stretch: Cys518-Cys535, Cys524-Cys566, Cys527-Cys544, and Cys538-Cys550. Asn575 and Asn600 each carry an N-linked (GlcNAc...) asparagine glycan. Residues Cys601 and Cys620 are joined by a disulfide bond. N-linked (GlcNAc...) asparagine glycans are attached at residues Asn656, Asn663, Asn764, and Asn772. Positions 663–710 (NCSVHKSCLSCVGSPYQCHWCKYRHTCTHDPSSCSFQEGRVKQPEECP) constitute a PSI 2 domain. Residues 811–864 (KCDARRESCGLCLKADPLFGCVWCKGENRCSLKQHCSYPQSMWLEHNGINSKCT) enclose the PSI 3 domain. IPT/TIG domains lie at 866 to 960 (PRIT…YYFV), 962 to 1046 (PQLL…FEYV), 1049 to 1148 (PTIT…FVYY), and 1151 to 1246 (PVFE…LSST). N-linked (GlcNAc...) asparagine glycans are attached at residues Asn981, Asn992, Asn1025, Asn1141, Asn1189, and Asn1214. A helical membrane pass occupies residues 1247–1267 (AVISIAGAGGLLIFFIVIVLI). Residues 1268 to 1903 (AYKRKSRESD…QVVAFMSLES (636 aa)) are Cytoplasmic-facing.

It belongs to the plexin family.

The protein resides in the cell membrane. Involved in the development of primary sensory neurons especially in branching of the peripheral axons. Interacts with the SLIT2 signaling specifically to promote axonal branching of Rohon-Beard neurons and the trigeminal sensory ganglion neurons. The sequence is that of Plexin-A4 (plxna4) from Danio rerio (Zebrafish).